Here is a 246-residue protein sequence, read N- to C-terminus: Cell division protein ZapD (246 aa).

The protein belongs to the ZapD family. As to quaternary structure, interacts with FtsZ.

It localises to the cytoplasm. Functionally, cell division factor that enhances FtsZ-ring assembly. Directly interacts with FtsZ and promotes bundling of FtsZ protofilaments, with a reduction in FtsZ GTPase activity. This chain is Cell division protein ZapD, found in Vibrio parahaemolyticus serotype O3:K6 (strain RIMD 2210633).